We begin with the raw amino-acid sequence, 245 residues long: MEPSGLRTPCSLLALVLLSALVLTPTLAIEVYTDREVYGTAGSRVTLSCSFWSSEWISDDISVTWHYQPDHSREMYSIVHFAKGLSSIDAGIFKDRIEWVGSPKWKDASIVVHNLELTDNGTFTCDVKNPPDVVGKSSYVHLQVQEKGPARAGLILGIIIAVALALVIVVTILILLIRYCWLRRKARVQRELSALERGKLHKAKDSSKRSSRQTPILYAMLDQTRGKSSEKKAKGGIGDSRKDRK.

The first 28 residues, 1-28 (MEPSGLRTPCSLLALVLLSALVLTPTLA), serve as a signal peptide directing secretion. In terms of domain architecture, Ig-like V-type spans 29–143 (IEVYTDREVY…VGKSSYVHLQ (115 aa)). The Extracellular segment spans residues 29–153 (IEVYTDREVY…VQEKGPARAG (125 aa)). Cys-49 and Cys-125 are disulfide-bonded. N-linked (GlcNAc...) asparagine glycosylation is present at Asn-120. The chain crosses the membrane as a helical span at residues 154–174 (LILGIIIAVALALVIVVTILI). The Cytoplasmic portion of the chain corresponds to 175-245 (LLIRYCWLRR…GIGDSRKDRK (71 aa)). Basic and acidic residues-rich tracts occupy residues 199–208 (KLHKAKDSSK) and 224–245 (TRGK…KDRK). Residues 199-245 (KLHKAKDSSKRSSRQTPILYAMLDQTRGKSSEKKAKGGIGDSRKDRK) form a disordered region.

The protein belongs to the myelin P0 protein family.

Its subcellular location is the cell membrane. Its function is as follows. Creation of an extracellular membrane face which guides the wrapping process and ultimately compacts adjacent lamellae. In Xenopus laevis (African clawed frog), this protein is Myelin protein P0 (mpz).